We begin with the raw amino-acid sequence, 377 residues long: Dehydrogenase/reductase SDR family member 13 (377 aa).

The N-terminal stretch at 1–25 (MEALLLGVGLLLGAYVLVYYNLVKA) is a signal peptide. Positions 46 and 48 each coordinate NAD(+). Serine 170 is a binding site for substrate. Residues tyrosine 197, lysine 201, and serine 232 each coordinate NAD(+). Catalysis depends on tyrosine 197, which acts as the Proton acceptor. Residues 310-363 (LAGLGPGEDAESDEDSQPEDPGTPSSPSSPHPEEPTVSELYPSPQSSTDRSTVT) are disordered. Positions 317–327 (EDAESDEDSQP) are enriched in acidic residues. The segment covering 328–337 (EDPGTPSSPS) has biased composition (low complexity). The span at 352–363 (SPQSSTDRSTVT) shows a compositional bias: polar residues.

This sequence belongs to the short-chain dehydrogenases/reductases (SDR) family.

The protein localises to the secreted. Its function is as follows. Putative oxidoreductase. The sequence is that of Dehydrogenase/reductase SDR family member 13 (DHRS13) from Bos taurus (Bovine).